The following is a 212-amino-acid chain: Thymidylate kinase (212 aa).

10–17 (GPDGAGKT) is an ATP binding site.

This sequence belongs to the thymidylate kinase family.

It carries out the reaction dTMP + ATP = dTDP + ADP. In terms of biological role, phosphorylation of dTMP to form dTDP in both de novo and salvage pathways of dTTP synthesis. The protein is Thymidylate kinase of Lactobacillus delbrueckii subsp. bulgaricus (strain ATCC 11842 / DSM 20081 / BCRC 10696 / JCM 1002 / NBRC 13953 / NCIMB 11778 / NCTC 12712 / WDCM 00102 / Lb 14).